We begin with the raw amino-acid sequence, 81 residues long: ATP synthase subunit c, chloroplastic (81 aa).

The next 2 membrane-spanning stretches (helical) occupy residues Pro-3 to Gly-23 and Leu-57 to Ala-77.

The protein belongs to the ATPase C chain family. As to quaternary structure, F-type ATPases have 2 components, F(1) - the catalytic core - and F(0) - the membrane proton channel. F(1) has five subunits: alpha(3), beta(3), gamma(1), delta(1), epsilon(1). F(0) has four main subunits: a(1), b(1), b'(1) and c(10-14). The alpha and beta chains form an alternating ring which encloses part of the gamma chain. F(1) is attached to F(0) by a central stalk formed by the gamma and epsilon chains, while a peripheral stalk is formed by the delta, b and b' chains.

Its subcellular location is the plastid. It is found in the chloroplast thylakoid membrane. F(1)F(0) ATP synthase produces ATP from ADP in the presence of a proton or sodium gradient. F-type ATPases consist of two structural domains, F(1) containing the extramembraneous catalytic core and F(0) containing the membrane proton channel, linked together by a central stalk and a peripheral stalk. During catalysis, ATP synthesis in the catalytic domain of F(1) is coupled via a rotary mechanism of the central stalk subunits to proton translocation. Its function is as follows. Key component of the F(0) channel; it plays a direct role in translocation across the membrane. A homomeric c-ring of between 10-14 subunits forms the central stalk rotor element with the F(1) delta and epsilon subunits. This chain is ATP synthase subunit c, chloroplastic, found in Ipomoea purpurea (Common morning glory).